Reading from the N-terminus, the 186-residue chain is UPF0398 protein BPUM_1952 (186 aa).

This sequence belongs to the UPF0398 family.

In Bacillus pumilus (strain SAFR-032), this protein is UPF0398 protein BPUM_1952.